The primary structure comprises 294 residues: Acetyl-coenzyme A carboxylase carboxyl transferase subunit beta (294 aa).

Positions 29–294 (LWEKCPECGQ…TQEVKLQTNA (266 aa)) constitute a CoA carboxyltransferase N-terminal domain. Zn(2+) is bound by residues C33, C36, C52, and C55. The segment at 33 to 55 (CPECGQVVYRKDLIDNCSVCSNC) adopts a C4-type zinc-finger fold.

The protein belongs to the AccD/PCCB family. Acetyl-CoA carboxylase is a heterohexamer composed of biotin carboxyl carrier protein (AccB), biotin carboxylase (AccC) and two subunits each of ACCase subunit alpha (AccA) and ACCase subunit beta (AccD). Requires Zn(2+) as cofactor.

The protein localises to the cytoplasm. It catalyses the reaction N(6)-carboxybiotinyl-L-lysyl-[protein] + acetyl-CoA = N(6)-biotinyl-L-lysyl-[protein] + malonyl-CoA. Its pathway is lipid metabolism; malonyl-CoA biosynthesis; malonyl-CoA from acetyl-CoA: step 1/1. Functionally, component of the acetyl coenzyme A carboxylase (ACC) complex. Biotin carboxylase (BC) catalyzes the carboxylation of biotin on its carrier protein (BCCP) and then the CO(2) group is transferred by the transcarboxylase to acetyl-CoA to form malonyl-CoA. This is Acetyl-coenzyme A carboxylase carboxyl transferase subunit beta from Prochlorococcus marinus (strain NATL1A).